The following is a 220-amino-acid chain: ATP synthase subunit beta, chloroplastic (220 aa).

This sequence belongs to the ATPase alpha/beta chains family. F-type ATPases have 2 components, CF(1) - the catalytic core - and CF(0) - the membrane proton channel. CF(1) has five subunits: alpha(3), beta(3), gamma(1), delta(1), epsilon(1). CF(0) has four main subunits: a(1), b(1), b'(1) and c(9-12).

It is found in the plastid. The protein localises to the chloroplast thylakoid membrane. It catalyses the reaction ATP + H2O + 4 H(+)(in) = ADP + phosphate + 5 H(+)(out). Produces ATP from ADP in the presence of a proton gradient across the membrane. The catalytic sites are hosted primarily by the beta subunits. This Osmundastrum cinnamomeum (Cinnamon fern) protein is ATP synthase subunit beta, chloroplastic (atpB).